Reading from the N-terminus, the 409-residue chain is Putative lipoate-protein ligase A (409 aa).

The region spanning 146–330 (GPDNCRLLFY…RFQKTFKVDG (185 aa)) is the BPL/LPL catalytic domain. ATP-binding positions include Arg-188, 193–196 (GTVL), and Lys-249. Lys-249 serves as a coordination point for (R)-lipoate.

Belongs to the LplA family. In terms of assembly, monomer.

It catalyses the reaction L-lysyl-[lipoyl-carrier protein] + (R)-lipoate + ATP = N(6)-[(R)-lipoyl]-L-lysyl-[lipoyl-carrier protein] + AMP + diphosphate + H(+). It participates in protein modification; protein lipoylation via exogenous pathway; protein N(6)-(lipoyl)lysine from lipoate: step 1/2. Its pathway is protein modification; protein lipoylation via exogenous pathway; protein N(6)-(lipoyl)lysine from lipoate: step 2/2. In terms of biological role, catalyzes both the ATP-dependent activation of exogenously supplied lipoate to lipoyl-AMP and the transfer of the activated lipoyl onto the lipoyl domains of lipoate-dependent enzymes. The sequence is that of Putative lipoate-protein ligase A (AIM22) from Saccharomyces cerevisiae (strain RM11-1a) (Baker's yeast).